The following is a 318-amino-acid chain: MSGAESYRHITVLLNEAVDALAVREDGVYVDGTFGRGGHSRLILSRLGDAGRLIVFDKDPQAIAVAEELARSDKRVGVVHGGFASFQTALDGLGIGKVDGALFDLGISSPQIDDGSRGFSFRFDAPLDMRMDTTRGMSAAEWIAVASEQDLHEVIKNYGEERFSRQIVRAIVAQRAESPIDTTRKLAQIVAQNVRTRERGQDPATRTFQAIRIFINRELEEVGAVLPQVMCRLKEGGRLAVIAFHSLEDRIVKQFVKKYSQHEPLPSWAAVREADLPDPPLKIVGRALKPGEAEIAANPRARSAVLRVAERTAGPIPE.

S-adenosyl-L-methionine contacts are provided by residues 37-39, Asp57, Phe83, Asp104, and Gln111; that span reads GGH.

This sequence belongs to the methyltransferase superfamily. RsmH family.

It is found in the cytoplasm. It catalyses the reaction cytidine(1402) in 16S rRNA + S-adenosyl-L-methionine = N(4)-methylcytidine(1402) in 16S rRNA + S-adenosyl-L-homocysteine + H(+). Functionally, specifically methylates the N4 position of cytidine in position 1402 (C1402) of 16S rRNA. This is Ribosomal RNA small subunit methyltransferase H from Neisseria gonorrhoeae (strain ATCC 700825 / FA 1090).